The primary structure comprises 372 residues: Cytochrome b (372 aa).

4 consecutive transmembrane segments (helical) span residues 25–45, 69–90, 105–125, and 170–190; these read FGSM…FLAI, WMMQ…YIHI, WLSG…GYVL, and FFAL…IHIM. Heme b-binding residues include His-75 and His-89. Heme b contacts are provided by His-174 and His-188. His-193 lines the a ubiquinone pocket. Transmembrane regions (helical) follow at residues 218-238, 280-300, 312-332, and 339-358; these read HKDM…MSFM, LGGT…PFTH, LMQF…WAAT, and FTTI…IMNP.

The protein belongs to the cytochrome b family. The cytochrome bc1 complex contains 3 respiratory subunits (MT-CYB, CYC1 and UQCRFS1), 2 core proteins (UQCRC1 and UQCRC2) and probably 6 low-molecular weight proteins. Requires heme b as cofactor.

It is found in the mitochondrion inner membrane. Component of the ubiquinol-cytochrome c reductase complex (complex III or cytochrome b-c1 complex) that is part of the mitochondrial respiratory chain. The b-c1 complex mediates electron transfer from ubiquinol to cytochrome c. Contributes to the generation of a proton gradient across the mitochondrial membrane that is then used for ATP synthesis. The polypeptide is Cytochrome b (MT-CYB) (Pantherophis obsoletus (Black ratsnake)).